The chain runs to 230 residues: Cytidylate kinase (230 aa).

12 to 20 is an ATP binding site; sequence GPSGAGKGT.

It belongs to the cytidylate kinase family. Type 1 subfamily.

The protein localises to the cytoplasm. The catalysed reaction is CMP + ATP = CDP + ADP. The enzyme catalyses dCMP + ATP = dCDP + ADP. The chain is Cytidylate kinase from Aeromonas hydrophila subsp. hydrophila (strain ATCC 7966 / DSM 30187 / BCRC 13018 / CCUG 14551 / JCM 1027 / KCTC 2358 / NCIMB 9240 / NCTC 8049).